The sequence spans 209 residues: Chaperone protein TorD (209 aa).

It belongs to the TorD/DmsD family. TorD subfamily.

Its subcellular location is the cytoplasm. Its function is as follows. Involved in the biogenesis of TorA. Acts on TorA before the insertion of the molybdenum cofactor and, as a result, probably favors a conformation of the apoenzyme that is competent for acquiring the cofactor. In Salmonella bongori (strain ATCC 43975 / DSM 13772 / NCTC 12419), this protein is Chaperone protein TorD.